The primary structure comprises 246 residues: Anamorsin homolog (246 aa).

The segment at 1 to 124 is N-terminal SAM-like domain; the sequence is MRVVVVDLDG…ARGTAFSLKS (124 aa). Residues 125 to 158 form a linker region; that stretch reads RAVRVVTADAGWGADADVDDELIDESALLTELDV. 4 residues coordinate [2Fe-2S] cluster: Cys168, Cys177, Cys180, and Cys182. A fe-S binding site A region spans residues 168 to 182; that stretch reads CDVGAGKKACKNCTC. Cys206, Cys209, Cys217, and Cys220 together coordinate [4Fe-4S] cluster. 2 consecutive short sequence motifs (cx2C motif) follow at residues 206–209 and 217–220; these read CGNC and CAGC. The fe-S binding site B stretch occupies residues 206–220; sequence CGNCALGDAFRCAGC.

Belongs to the anamorsin family. As to quaternary structure, monomer. [2Fe-2S] cluster is required as a cofactor. The cofactor is [4Fe-4S] cluster.

The protein resides in the cytoplasm. It localises to the mitochondrion intermembrane space. Component of the cytosolic iron-sulfur (Fe-S) protein assembly (CIA) machinery. Required for the maturation of extramitochondrial Fe-S proteins. Part of an electron transfer chain functioning in an early step of cytosolic Fe-S biogenesis, facilitating the de novo assembly of a [4Fe-4S] cluster on the cytosolic Fe-S scaffold complex. Electrons are transferred from NADPH via a FAD- and FMN-containing diflavin oxidoreductase. Together with the diflavin oxidoreductase, also required for the assembly of the diferric tyrosyl radical cofactor of ribonucleotide reductase (RNR), probably by providing electrons for reduction during radical cofactor maturation in the catalytic small subunit. This chain is Anamorsin homolog, found in Ostreococcus tauri.